The sequence spans 408 residues: Guanine nucleotide-binding protein alpha-14 subunit (408 aa).

GTP-binding positions include His38 to Lys45, Gly78 to Ser85, Asn201 to Lys205, Val216 to Thr222, Asp241 to Gln245, Phe285 to Phe288, Asn325 to Asp328, and Ala380. The 339-residue stretch at Ser70–Ser408 folds into the G-alpha domain. The interval Lys73–Thr86 is G1 motif. Ser85 lines the Mg(2+) pocket. The interval Asp214–Thr222 is G2 motif. Thr222 is a Mg(2+) binding site. The interval Leu237–Arg246 is G3 motif. The interval Leu321–Asp328 is G4 motif. The G5 motif stretch occupies residues Thr378–Thr383.

Belongs to the G-alpha family. As to quaternary structure, g proteins are composed of 3 units; alpha, beta and gamma. The alpha chain contains the guanine nucleotide binding site.

Its function is as follows. Guanine nucleotide-binding proteins (G proteins) are involved as modulators or transducers in various transmembrane signaling systems. The chain is Guanine nucleotide-binding protein alpha-14 subunit (gpa-14) from Caenorhabditis briggsae.